The sequence spans 238 residues: Pyruvate formate-lyase-activating enzyme (238 aa).

In terms of domain architecture, Radical SAM core spans 15–236 (VDGPGIRTVV…KKLEKYLKEL (222 aa)). Residues cysteine 29, cysteine 33, and cysteine 36 each contribute to the [4Fe-4S] cluster site. Residues 35 to 37 (YCH), glycine 78, 126 to 128 (DIK), and histidine 199 contribute to the S-adenosyl-L-methionine site.

It belongs to the organic radical-activating enzymes family. Requires [4Fe-4S] cluster as cofactor.

Its subcellular location is the cytoplasm. The enzyme catalyses glycyl-[formate C-acetyltransferase] + reduced [flavodoxin] + S-adenosyl-L-methionine = glycin-2-yl radical-[formate C-acetyltransferase] + semiquinone [flavodoxin] + 5'-deoxyadenosine + L-methionine + H(+). In terms of biological role, activation of pyruvate formate-lyase under anaerobic conditions by generation of an organic free radical, using S-adenosylmethionine and reduced flavodoxin as cosubstrates to produce 5'-deoxy-adenosine. The protein is Pyruvate formate-lyase-activating enzyme (act) of Clostridium pasteurianum.